Consider the following 485-residue polypeptide: Katanin p60 ATPase-containing subunit A1 (485 aa).

The segment at 101–173 (HRSSPCVVRK…KNKAEAVETE (73 aa)) is disordered. The segment covering 141-173 (NGDKGKPQKSKEKKENPSKPKEDKNKAEAVETE) has biased composition (basic and acidic residues). 244 to 251 (GPPGTGKT) serves as a coordination point for ATP.

Belongs to the AAA ATPase family. Katanin p60 subunit A1 subfamily. In terms of assembly, can homooligomerize into hexameric rings, which may be promoted by interaction with microtubules. Interacts with katnb1, which may serve as a targeting subunit.

The protein localises to the cytoplasm. Its subcellular location is the cytoskeleton. The protein resides in the microtubule organizing center. It localises to the centrosome. It is found in the spindle pole. The protein localises to the spindle. The enzyme catalyses n ATP + n H2O + a microtubule = n ADP + n phosphate + (n+1) alpha/beta tubulin heterodimers.. ATPase activity is stimulated by microtubules, which promote homooligomerization. ATP-dependent microtubule severing is stimulated by interaction with katnb1. In terms of biological role, catalytic subunit of a complex which severs microtubules in an ATP-dependent manner. Microtubule severing may promote rapid reorganization of cellular microtubule arrays and the release of microtubules from the centrosome following nucleation. In Danio rerio (Zebrafish), this protein is Katanin p60 ATPase-containing subunit A1 (katna1).